The chain runs to 1242 residues: Reverse gyrase 1 (1242 aa).

The RG N-terminal-type zinc finger occupies 6–46 (KVPPSIYTRSCPNCGGNISSQRLFNGSVCESCLKDDREFSN). 4 residues coordinate Zn(2+): cysteine 16, cysteine 19, cysteine 34, and cysteine 37. Residues glutamine 93 and 110–117 (APPGLGKT) contribute to the ATP site. Positions 97–298 (TIRFLRGESF…SLMGFRPGSS (202 aa)) constitute a Helicase ATP-binding domain. Residues 214 to 217 (DDVD) carry the DEAD box motif. The interval 615–1242 (LSVKTTLFIV…ELYNEIQTIS (628 aa)) is topoisomerase I. In terms of domain architecture, Toprim spans 619–785 (TTLFIVESPN…NIKRAEFHEV (167 aa)). Glutamate 625 is a Mg(2+) binding site. The RG C-terminal-type; atypical zinc finger occupies 703–731 (IKKCEKGHQIVKDLSQNKCPICGSRIVTD). The Zn(2+) site is built by cysteine 706, histidine 710, cysteine 721, and cysteine 724. Mg(2+) is bound at residue aspartate 754. The 442-residue stretch at 801–1242 (NDNLVKSQIV…ELYNEIQTIS (442 aa)) folds into the Topo IA-type catalytic domain. Catalysis depends on tyrosine 965, which acts as the O-(5'-phospho-DNA)-tyrosine intermediate.

This sequence in the N-terminal section; belongs to the DEAD box helicase family. DDVD subfamily. The protein in the C-terminal section; belongs to the type IA topoisomerase family. As to quaternary structure, monomer. The cofactor is Zn(2+). Mg(2+) is required as a cofactor.

It is found in the cytoplasm. The enzyme catalyses ATP + H2O = ADP + phosphate + H(+). At least one of the two reverse gyrase proteins is inhibited by actinomycin D. Highly sensitive to NaCl concentrations, maximal positive supercoiling is observed with 10 mM NaCl; as NaCl rises, supercoiling decreases. At 300 mM NaCl relaxes but does not introduce positive supercoils into negatively supercoiled substrate, at 400 mM NaCl does not relax DNA. Functionally, modifies the topological state of DNA by introducing positive supercoils in an ATP-dependent process. Increases the linking number in steps of +1. Involved in homeostatic control of DNA topology in balance with type II topoisomerase 6 (TopoVI); levels of TopoVI are constant at 80 and 88 degrees Celsius and TopoVI is probably less active at 88 degrees (characterized enzyme is from S.shibatae B12), so reverse gyrase mediates most of the fine-tuning of DNA topology. Changes the DNA linking number step-by-step in a distributive manner. At low protein to DNA ratios mostly relaxes negatively supercoiled substrate, as ratios rise more positive supercoils are introduced. At 90 degrees Celsius introduces 19 positive supercoils into pTZ18R DNA (probably 2860 bp), less than TopR2. Relaxes negatively supercoiled DNA in the absence of ATP. It cleaves transiently a single DNA strand and remains covalently bound to the 5' DNA end through a tyrosine residue. May be involved in DNA damage response. Its activity is inhibited by the DNA-binding protein 7d (Sso7d), suggesting that the Sso7d activity might counteract the overwinding effect of reverse gyrase. Resolves 4-way Holliday junctions (HJ) with 20 bases in each arm in vitro, distorting the junction. Very high protein levels are required, but total enzyme content of the cell (there are 2 reverse gyrases in this organism) is estimated to be 20-200 molecules/cell. HJ resolution does not require either ATPase activity or the active tyrosine. The individual domains do not resolve HJs but do so when mixed. Also unwinds a fork substrate. Its function is as follows. There are 2 genes for this protein in the cell. During exponential growth this is the less expressed isoform (about 52 molecules per cell at 80 degrees Celsius, about 28 molecules at 88 degrees Celsius); this isoform is more active at higher temperature. Grows actively at both 80 and 88 degrees Celsius; survives a long exposure at 45 degrees Celsius without DNA replication or cell division occurring. Experiments using whole cell extracts do not distinguish which isoform is present, the results are probably a mixture of the two forms. The protein is Reverse gyrase 1 of Saccharolobus solfataricus (strain ATCC 35092 / DSM 1617 / JCM 11322 / P2) (Sulfolobus solfataricus).